The chain runs to 342 residues: Probable RNA methyltransferase PST_2231 (342 aa).

The active-site Proton acceptor is Glu-91. The Radical SAM core domain maps to 94-320 (LLPRDGLCVS…TKVRNSAGQD (227 aa)). An intrachain disulfide couples Cys-101 to Cys-325. [4Fe-4S] cluster contacts are provided by Cys-108, Cys-112, and Cys-115. S-adenosyl-L-methionine is bound by residues 153-154 (GE), Ser-183, 206-208 (SLH), and Asn-282. The active-site S-methylcysteine intermediate is Cys-325.

This sequence belongs to the radical SAM superfamily. RlmN family. [4Fe-4S] cluster serves as cofactor.

The protein localises to the cytoplasm. The sequence is that of Probable RNA methyltransferase PST_2231 from Stutzerimonas stutzeri (strain A1501) (Pseudomonas stutzeri).